The chain runs to 105 residues: Large ribosomal subunit protein bL21 (105 aa).

The protein belongs to the bacterial ribosomal protein bL21 family. Part of the 50S ribosomal subunit. Contacts protein L20.

This protein binds to 23S rRNA in the presence of protein L20. The protein is Large ribosomal subunit protein bL21 of Rickettsia bellii (strain OSU 85-389).